Consider the following 122-residue polypeptide: Large ribosomal subunit protein uL14 (122 aa).

It belongs to the universal ribosomal protein uL14 family. As to quaternary structure, part of the 50S ribosomal subunit. Forms a cluster with proteins L3 and L19. In the 70S ribosome, L14 and L19 interact and together make contacts with the 16S rRNA in bridges B5 and B8.

In terms of biological role, binds to 23S rRNA. Forms part of two intersubunit bridges in the 70S ribosome. The protein is Large ribosomal subunit protein uL14 of Rickettsia felis (strain ATCC VR-1525 / URRWXCal2) (Rickettsia azadi).